The primary structure comprises 461 residues: Glutamyl-tRNA reductase (461 aa).

Substrate contacts are provided by residues 50–53 (TCNR), S111, 116–118 (EPQ), and Q122. C51 acts as the Nucleophile in catalysis. An NADP(+)-binding site is contributed by 191–196 (GAGEMA).

Belongs to the glutamyl-tRNA reductase family. In terms of assembly, homodimer.

The catalysed reaction is (S)-4-amino-5-oxopentanoate + tRNA(Glu) + NADP(+) = L-glutamyl-tRNA(Glu) + NADPH + H(+). Its pathway is porphyrin-containing compound metabolism; protoporphyrin-IX biosynthesis; 5-aminolevulinate from L-glutamyl-tRNA(Glu): step 1/2. Functionally, catalyzes the NADPH-dependent reduction of glutamyl-tRNA(Glu) to glutamate 1-semialdehyde (GSA). This is Glutamyl-tRNA reductase from Syntrophobacter fumaroxidans (strain DSM 10017 / MPOB).